Consider the following 76-residue polypeptide: MGGLSIWHWLIVLLIVALVFGTKKLRNIGNDLGSAVKGFKDGMKEGETPADAQQLPRTGTVDVNAKETTRSDSNKA.

Residues 1 to 21 (MGGLSIWHWLIVLLIVALVFG) traverse the membrane as a helical segment. A disordered region spans residues 40–76 (KDGMKEGETPADAQQLPRTGTVDVNAKETTRSDSNKA). Over residues 64–76 (NAKETTRSDSNKA) the composition is skewed to basic and acidic residues.

The protein belongs to the TatA/E family. The Tat system comprises two distinct complexes: a TatABC complex, containing multiple copies of TatA, TatB and TatC subunits, and a separate TatA complex, containing only TatA subunits. Substrates initially bind to the TatABC complex, which probably triggers association of the separate TatA complex to form the active translocon.

The protein localises to the cell inner membrane. Its function is as follows. Part of the twin-arginine translocation (Tat) system that transports large folded proteins containing a characteristic twin-arginine motif in their signal peptide across membranes. TatA could form the protein-conducting channel of the Tat system. In Burkholderia ambifaria (strain MC40-6), this protein is Sec-independent protein translocase protein TatA.